Consider the following 560-residue polypeptide: Choline/ethanolamine transporter FLVCR1 (560 aa).

Residues 1–22 (MVKLNDEEGAAMAPGHQPTNGY) form a disordered region. The Cytoplasmic segment spans residues 1–99 (MVKLNDEEGA…TPGTEGSPAP (99 aa)). S56 bears the Phosphoserine mark. The interval 68–99 (QTPLAPEEETQTRLLPTGPGEETPGTEGSPAP) is disordered. Low complexity predominate over residues 83–95 (PTGPGEETPGTEG). A helical transmembrane segment spans residues 100-124 (QTALSARRFVVLLIFSLYSLVNAFQ). Over 125 to 142 (WIQYSVISNVFEGFYGVS) the chain is Extracellular. The helical transmembrane segment at 143–170 (SLHIDWLSMVYMLAYVPLIFPATWLLDT) threads the bilayer. The Cytoplasmic portion of the chain corresponds to 171–172 (RG). The helical transmembrane segment at 173–192 (LRLTALLGSGLNCLGAWVKC) threads the bilayer. Topologically, residues 193–199 (ASVQQHL) are extracellular. A helical membrane pass occupies residues 200 to 228 (FWVTMLGQCLCSVAQVFILGLPSRIASVW). An ethanolamine-binding site is contributed by Q214. At 229-233 (FGPKE) the chain is on the cytoplasmic side. The helical transmembrane segment at 234 to 259 (VSTACATAVLGNQLGAAIGFLLPPVL) threads the bilayer. At 260 to 265 (VPNTQN) the chain is on the extracellular side. N-linked (GlcNAc...) asparagine glycosylation occurs at N265. The chain crosses the membrane as a helical span at residues 266–295 (NTDLLACNISTMFYGTSSVATFLCFLTIIA). The Cytoplasmic portion of the chain corresponds to 296–331 (FKEKPQYPPSQAQAALQNSPPAKYSYKKSIRNLFRN). The helical transmembrane segment at 332 to 362 (VPFVLLLITYGIITGAFYSVSTLLNQMILTY) threads the bilayer. Topologically, residues 363-366 (YKGE) are extracellular. A helical transmembrane segment spans residues 367–395 (EVSAGKIGLTLVVAGMVGSILCGFWLDYT). The Cytoplasmic segment spans residues 396–397 (KI). A helical membrane pass occupies residues 398 to 420 (YKQTTLIVYILSFLGMVIFTFTL). Residues 421-423 (DLG) are Extracellular-facing. A helical transmembrane segment spans residues 424–453 (YGIVVFVTGGVLGFFMTGYLPLGFEFAVEI). Residues 454–461 (TYPESEGT) lie on the Cytoplasmic side of the membrane. The helical transmembrane segment at 462–487 (SSGLLNAAAQIFGILFTLAQGKLTTD) threads the bilayer. Q471 is a binding site for ethanolamine. Q471 contributes to the choline binding site. At 488–489 (YS) the chain is on the extracellular side. A helical membrane pass occupies residues 490 to 512 (PKAGNIFLCVWLFLGIILTALIK). Over 513-560 (SDLRRHNINIGIANGDIKAVPVEDTVEDSPTDKESKTIVMSKQSESAI) the chain is Cytoplasmic. The disordered stretch occupies residues 537–560 (TVEDSPTDKESKTIVMSKQSESAI). S541 is modified (phosphoserine). The span at 550–560 (IVMSKQSESAI) shows a compositional bias: polar residues.

The protein belongs to the major facilitator superfamily. Feline leukemia virus subgroup C receptor (TC 2.A.1.28.1) family.

It localises to the cell membrane. The enzyme catalyses choline(out) = choline(in). It catalyses the reaction ethanolamine(in) = ethanolamine(out). It carries out the reaction heme b(in) = heme b(out). In terms of biological role, uniporter that mediates the transport of extracellular choline and ethanolamine into cells, thereby playing a key role in phospholipid biosynthesis. Choline and ethanolamine are the precursors of phosphatidylcholine and phosphatidylethanolamine, respectively, the two most abundant phospholipids. Transport is not coupled with proton transport and is exclusively driven by the choline (or ethanolamine) gradient across the plasma membrane. Also acts as a heme b transporter that mediates heme efflux from the cytoplasm to the extracellular compartment. Its function is as follows. (Microbial infection) Confers susceptibility to Feline leukemia virus subgroup C (FeLV-C) infection, which is associated with fatal erythroid aplasia, also known as aplastic anemia. This chain is Choline/ethanolamine transporter FLVCR1 (FLVCR1), found in Felis catus (Cat).